We begin with the raw amino-acid sequence, 78 residues long: Protein SlyX homolog (78 aa).

Belongs to the SlyX family.

The chain is Protein SlyX homolog from Xanthomonas oryzae pv. oryzae (strain MAFF 311018).